We begin with the raw amino-acid sequence, 476 residues long: Aspartyl/glutamyl-tRNA(Asn/Gln) amidotransferase subunit B (476 aa).

It belongs to the GatB/GatE family. GatB subfamily. In terms of assembly, heterotrimer of A, B and C subunits.

It catalyses the reaction L-glutamyl-tRNA(Gln) + L-glutamine + ATP + H2O = L-glutaminyl-tRNA(Gln) + L-glutamate + ADP + phosphate + H(+). The enzyme catalyses L-aspartyl-tRNA(Asn) + L-glutamine + ATP + H2O = L-asparaginyl-tRNA(Asn) + L-glutamate + ADP + phosphate + 2 H(+). Allows the formation of correctly charged Asn-tRNA(Asn) or Gln-tRNA(Gln) through the transamidation of misacylated Asp-tRNA(Asn) or Glu-tRNA(Gln) in organisms which lack either or both of asparaginyl-tRNA or glutaminyl-tRNA synthetases. The reaction takes place in the presence of glutamine and ATP through an activated phospho-Asp-tRNA(Asn) or phospho-Glu-tRNA(Gln). The chain is Aspartyl/glutamyl-tRNA(Asn/Gln) amidotransferase subunit B from Clostridium botulinum (strain Loch Maree / Type A3).